Here is a 207-residue protein sequence, read N- to C-terminus: Large ribosomal subunit protein uL4 (207 aa).

This sequence belongs to the universal ribosomal protein uL4 family. In terms of assembly, part of the 50S ribosomal subunit.

In terms of biological role, one of the primary rRNA binding proteins, this protein initially binds near the 5'-end of the 23S rRNA. It is important during the early stages of 50S assembly. It makes multiple contacts with different domains of the 23S rRNA in the assembled 50S subunit and ribosome. Functionally, forms part of the polypeptide exit tunnel. This Rickettsia conorii (strain ATCC VR-613 / Malish 7) protein is Large ribosomal subunit protein uL4.